Here is a 223-residue protein sequence, read N- to C-terminus: MELYLDTASLEEIREIAAWGVLSGVTTNPTLVAKVFAAKGEALTEEAFAAHLRAICETVGGPVSAEVTALEAEAMVAEGRRLAAIHPQIVVKLPTTEEGLKACKRLSAEGIRVNMTLIFSANQALLAARAGASYVSPFLGRVDDISWDGGELLREIVEMIQVQDLPVKVIAASIRHPRHVTEAALLGADIATMPHAVFKQLLKHPLTDIGLKRFLEDWEKVKP.

Lysine 92 serves as the catalytic Schiff-base intermediate with substrate.

This sequence belongs to the transaldolase family. Type 3B subfamily.

The protein resides in the cytoplasm. The catalysed reaction is D-sedoheptulose 7-phosphate + D-glyceraldehyde 3-phosphate = D-erythrose 4-phosphate + beta-D-fructose 6-phosphate. The protein operates within carbohydrate degradation; pentose phosphate pathway; D-glyceraldehyde 3-phosphate and beta-D-fructose 6-phosphate from D-ribose 5-phosphate and D-xylulose 5-phosphate (non-oxidative stage): step 2/3. Functionally, transaldolase is important for the balance of metabolites in the pentose-phosphate pathway. The protein is Probable transaldolase of Thermus thermophilus (strain ATCC BAA-163 / DSM 7039 / HB27).